We begin with the raw amino-acid sequence, 366 residues long: Isocitrate dehydrogenase [NAD] subunit alpha, mitochondrial (366 aa).

Residues 1–27 constitute a mitochondrion transit peptide; it reads MAGSAWVSKVSRLLGAFHNTKQVTRGF. Residue Lys-77 is modified to N6-succinyllysine. Thr-101 is subject to Phosphothreonine. Residues Arg-115, Arg-125, and Arg-146 each coordinate substrate. The residue at position 223 (Lys-223) is an N6-acetyllysine. Residues Asp-233, Asp-257, and Asp-261 each coordinate Mg(2+). N6-acetyllysine; alternate is present on Lys-343. At Lys-343 the chain carries N6-succinyllysine; alternate. N6-succinyllysine is present on Lys-350.

It belongs to the isocitrate and isopropylmalate dehydrogenases family. In terms of assembly, heterooligomer of subunits alpha (IDH3A), beta (IDH3B), and gamma (IDH3G) in the apparent ratio of 2:1:1. The heterodimer containing one IDH3A and one IDH3B subunit and the heterodimer containing one IDH3A and one IDH3G subunit assemble into a heterotetramer (which contains two subunits of IDH3A, one of IDH3B and one of IDH3G) and further into the heterooctamer. Mg(2+) is required as a cofactor. It depends on Mn(2+) as a cofactor. In terms of tissue distribution, expressed in brown adipose tissue (BAT).

The protein resides in the mitochondrion. It catalyses the reaction D-threo-isocitrate + NAD(+) = 2-oxoglutarate + CO2 + NADH. The heterotetramer and the heterodimer composed of IDH3A and IDH3G subunits can be allosterically activated by citrate (CIT) or/and ADP, and the two activators can act independently or synergistically. The heterodimer composed of IDH3A and IDH3B subunits cannot be allosterically regulated and the allosteric regulation of the heterotetramer is through the IDH3G subunit and not the IDH3B subunit. The IDH3G subunit contains the allosteric site which consists of a CIT-binding site and an ADP-binding site, and the binding of CIT and ADP causes conformational changes at the allosteric site which are transmitted to the active site in the catalytic subunit (IDH3A) through a cascade of conformational changes at the heterodimer interface, leading to stabilization of the isocitrate-binding at the active site and thus activation of the enzyme. ATP can activate the heterotetramer and the heterodimer composed of IDH3A and IDH3G subunits at low concentrations but inhibits their activities at high concentrations, whereas ATP exhibits only inhibitory effect on the heterodimer composed of IDH3A and IDH3B subunits. Its function is as follows. Catalytic subunit of the enzyme which catalyzes the decarboxylation of isocitrate (ICT) into alpha-ketoglutarate. The heterodimer composed of the alpha (IDH3A) and beta (IDH3B) subunits and the heterodimer composed of the alpha (IDH3A) and gamma (IDH3G) subunits, have considerable basal activity but the full activity of the heterotetramer (containing two subunits of IDH3A, one of IDH3B and one of IDH3G) requires the assembly and cooperative function of both heterodimers. The sequence is that of Isocitrate dehydrogenase [NAD] subunit alpha, mitochondrial from Rattus norvegicus (Rat).